We begin with the raw amino-acid sequence, 147 residues long: Large ribosomal subunit protein uL15 (147 aa).

Positions 1-42 (MTIKVHHLRPAPGAKTAKTRVGRGEGSKGKTAGRGTKGSKAR) are disordered.

This sequence belongs to the universal ribosomal protein uL15 family. Part of the 50S ribosomal subunit.

Its function is as follows. Binds to the 23S rRNA. The protein is Large ribosomal subunit protein uL15 of Salinispora arenicola (strain CNS-205).